The chain runs to 488 residues: PPE family protein PPE10 (488 aa).

Disordered stretches follow at residues 207–232 (NNNW…NIGS) and 443–488 (SDAG…LRTE).

Belongs to the mycobacterial PPE family.

It localises to the secreted. Its function is as follows. Plays a major role in the integrity and stability of the capsule. This Mycobacterium marinum (strain ATCC BAA-535 / M) protein is PPE family protein PPE10.